A 326-amino-acid polypeptide reads, in one-letter code: N-acetyl-gamma-glutamyl-phosphate reductase (326 aa).

The active site involves Cys155.

Belongs to the NAGSA dehydrogenase family. Type 1 subfamily.

It localises to the cytoplasm. It carries out the reaction N-acetyl-L-glutamate 5-semialdehyde + phosphate + NADP(+) = N-acetyl-L-glutamyl 5-phosphate + NADPH + H(+). It participates in amino-acid biosynthesis; L-arginine biosynthesis; N(2)-acetyl-L-ornithine from L-glutamate: step 3/4. Its function is as follows. Catalyzes the NADPH-dependent reduction of N-acetyl-5-glutamyl phosphate to yield N-acetyl-L-glutamate 5-semialdehyde. This chain is N-acetyl-gamma-glutamyl-phosphate reductase, found in Shewanella frigidimarina (strain NCIMB 400).